The primary structure comprises 73 residues: Structural DNA-binding protein p10 (73 aa).

The tract at residues 1–35 (MPTKAGTKSTAHKKTTTKGPSKSPKGKTHATALHQ) is disordered.

It belongs to the asfivirus P10 family.

It localises to the virion. May play a role in genome packaging through direct interaction with viral DNA. Binds to ssDNA and dsDNA with the same apparent affinity in vitro. This is Structural DNA-binding protein p10 from African swine fever virus (isolate Tick/Malawi/Lil 20-1/1983) (ASFV).